The sequence spans 211 residues: Urease accessory protein UreG (211 aa).

Residue 11 to 18 (GPVGAGKT) participates in GTP binding.

It belongs to the SIMIBI class G3E GTPase family. UreG subfamily. Homodimer. UreD, UreF and UreG form a complex that acts as a GTP-hydrolysis-dependent molecular chaperone, activating the urease apoprotein by helping to assemble the nickel containing metallocenter of UreC. The UreE protein probably delivers the nickel.

It localises to the cytoplasm. Its function is as follows. Facilitates the functional incorporation of the urease nickel metallocenter. This process requires GTP hydrolysis, probably effectuated by UreG. In Actinobacillus pleuropneumoniae serotype 3 (strain JL03), this protein is Urease accessory protein UreG.